The primary structure comprises 243 residues: UPF0246 protein SpyM3_1790 (243 aa).

This sequence belongs to the UPF0246 family.

The sequence is that of UPF0246 protein SpyM3_1790 from Streptococcus pyogenes serotype M3 (strain ATCC BAA-595 / MGAS315).